Consider the following 299-residue polypeptide: Acetylglutamate kinase (299 aa).

Residues 72 to 73 (GG), R94, and N196 each bind substrate.

Belongs to the acetylglutamate kinase family. ArgB subfamily.

It localises to the cytoplasm. The enzyme catalyses N-acetyl-L-glutamate + ATP = N-acetyl-L-glutamyl 5-phosphate + ADP. The protein operates within amino-acid biosynthesis; L-arginine biosynthesis; N(2)-acetyl-L-ornithine from L-glutamate: step 2/4. In terms of biological role, catalyzes the ATP-dependent phosphorylation of N-acetyl-L-glutamate. This is Acetylglutamate kinase from Burkholderia thailandensis (strain ATCC 700388 / DSM 13276 / CCUG 48851 / CIP 106301 / E264).